The primary structure comprises 161 residues: Bacterial E2-like ubiquitin protein BilB (161 aa).

Cysteine 113 acts as the Glycyl thioester intermediate in catalysis.

In terms of biological role, component of the Bil (bacterial ISG15-like) antiviral defense system, composed of BilA, BilB, BilC and BilD. The Bil system specifically conjugates a ubiquitin-like moiety (bilA) to the bacteriophage central tail fiber (CTF, or tip attachment protein J) via reactions involving E1 (bilD) and E2 (bilB). Modifies CTF of phage SECphi27 and SECphi4, which probably interferes with assembly of the phage tail. Also modifies T5 baseplate hub protein pb3 (gene D16), but not gp27 of phage T6 (Bil defends against T6). BilB probably accepts ubiquitin from the BilA-BilD (E1) complex and catalyzes its covalent attachment to target protein (CTF). Bil-encoding bacteria produce mostly defective phage SECphi27, many of which have phage assembly defects, including no tails. SECphi27 phage progeny produced in E.coli with the Bil system inject less DNA into naive host cells, maybe because the phage are less able to adsorb and inject their DNA into host cells. Functionally, expression of the Bil system in E.coli (strain MG1655) confers about 100-fold resistance to phage SECphi27, SECphi18, SECphi6, SECphi4 and T5, but not to SECphi17. When cells expressing the Bil system are infected by phage SECphi27 at low multiplicity of infection (0.03 MOI) the culture survives, at 3.0 MOI the culture collapses at the same time as cells without the Bil system. This chain is Bacterial E2-like ubiquitin protein BilB, found in Collimonas sp. (strain OK412).